The following is a 358-amino-acid chain: MKPFPRAEISSSALQNNLAVLRQQASRSQVMAVVKANGYGHGLLNVANCLHTADGFGLARLEEALELRAGGVKARLLLLEGFFRSTDLPLLVAHDIDTVVHHESQIEMLEQATLSKPVTVWLKVDSGMHRLGVTPEQFAQVYARLTACDNVAKPIHLMTHFACADEPENHYTQVQMQTFNQLTADLPGFRTLANSAGALYWPKSQGDWIRPGIALYGVSPVTGDCGANHGLIPAMNLVSRLIAVRDHKAGQPVGYGCYWTAKQDTRLGVVAIGYGDGYPRNAPEGTPVWVNGRRVPIVGRVSMDMLTVDLGADATDLVGDEALLWGAALPVEEVAEHIGTIAYELVTKLTPRVAVCLA.

The active-site Proton acceptor; specific for D-alanine is the Lys35. Lys35 is modified (N6-(pyridoxal phosphate)lysine). Arg130 is a binding site for substrate. Catalysis depends on Tyr255, which acts as the Proton acceptor; specific for L-alanine. Met303 lines the substrate pocket.

This sequence belongs to the alanine racemase family. The cofactor is pyridoxal 5'-phosphate.

It catalyses the reaction L-alanine = D-alanine. Its pathway is amino-acid biosynthesis; D-alanine biosynthesis; D-alanine from L-alanine: step 1/1. In terms of biological role, catalyzes the interconversion of L-alanine and D-alanine. May also act on other amino acids. This Shewanella sp. (strain MR-4) protein is Alanine racemase (alr).